A 492-amino-acid polypeptide reads, in one-letter code: Trehalose-6-phosphate synthase (492 aa).

Residue Arg25 participates in D-glucose 6-phosphate binding. Gly45–Gly46 is a binding site for UDP-alpha-D-glucose. The D-glucose 6-phosphate site is built by Tyr101 and Asp155. The UDP-alpha-D-glucose site is built by Arg297 and Lys302. Arg335 is a binding site for D-glucose 6-phosphate. Leu400–Glu404 provides a ligand contact to UDP-alpha-D-glucose.

The protein belongs to the glycosyltransferase 20 family. Homotetramer.

The enzyme catalyses ADP-alpha-D-glucose + D-glucose 6-phosphate = alpha,alpha-trehalose 6-phosphate + ADP + H(+). It carries out the reaction CDP-alpha-D-glucose + D-glucose 6-phosphate = alpha,alpha-trehalose 6-phosphate + CDP + H(+). The catalysed reaction is GDP-alpha-D-glucose + D-glucose 6-phosphate = alpha,alpha-trehalose 6-phosphate + GDP + H(+). It catalyses the reaction TDP-alpha-D-glucose + D-glucose 6-phosphate = 5-methyl-UDP + alpha,alpha-trehalose 6-phosphate + H(+). The enzyme catalyses D-glucose 6-phosphate + UDP-alpha-D-glucose = alpha,alpha-trehalose 6-phosphate + UDP + H(+). It functions in the pathway glycan biosynthesis; trehalose biosynthesis. Its function is as follows. Probably involved in the osmoprotection via the biosynthesis of trehalose and in the production of glycogen and alpha-glucan via the TreS-Pep2 branch involved in the biosynthesis of maltose-1-phosphate (M1P). Catalyzes the transfer of glucose from UDP-glucose (UDP-Glc) to D-glucose 6-phosphate (Glc-6-P) to form trehalose-6-phosphate. Probably also able to use ADP-Glc, CDP-Glc, GDP-Glc and TDP-Glc as glucosyl donors. The polypeptide is Trehalose-6-phosphate synthase (Mycobacterium avium (strain 104)).